The following is a 430-amino-acid chain: Enolase (430 aa).

Glutamine 167 is a (2R)-2-phosphoglycerate binding site. The active-site Proton donor is glutamate 209. Mg(2+) is bound by residues aspartate 246, glutamate 287, and aspartate 314. Positions 339, 368, 369, and 390 each coordinate (2R)-2-phosphoglycerate. Lysine 339 functions as the Proton acceptor in the catalytic mechanism.

The protein belongs to the enolase family. Requires Mg(2+) as cofactor.

It localises to the cytoplasm. Its subcellular location is the secreted. The protein localises to the cell surface. It carries out the reaction (2R)-2-phosphoglycerate = phosphoenolpyruvate + H2O. It participates in carbohydrate degradation; glycolysis; pyruvate from D-glyceraldehyde 3-phosphate: step 4/5. In terms of biological role, catalyzes the reversible conversion of 2-phosphoglycerate (2-PG) into phosphoenolpyruvate (PEP). It is essential for the degradation of carbohydrates via glycolysis. This is Enolase from Prochlorococcus marinus subsp. pastoris (strain CCMP1986 / NIES-2087 / MED4).